A 257-amino-acid chain; its full sequence is RING1 and YY1-binding protein B (257 aa).

Disordered regions lie at residues 1–24 (MGDKKSPTRPKRQAKPTADNGFWD) and 45–257 (RKGT…DESF). A RanBP2-type zinc finger spans residues 19–48 (DNGFWDCSVCTFRNSAEAFKCSICDVRKGT). A compositionally biased stretch (basic and acidic residues) spans 74–129 (PKKEKKEKPERPEKDRAEEERPDINPPDEHPVEQRDKDKSEKEQPEKEKKDREKEI). Positions 149-168 (HQSPPSERNSIQSGKSTTKT) are enriched in polar residues. A compositionally biased stretch (basic residues) spans 169–178 (KNSHNSRPKL). The segment covering 209–233 (TSSTSSSTVTSSASSEQQHQSSGSE) has biased composition (low complexity).

The protein resides in the nucleus. It localises to the cytoplasm. In terms of biological role, may be implicated in the regulation of the transcription as a repressor of the transcriptional activity of E4TF1. This Danio rerio (Zebrafish) protein is RING1 and YY1-binding protein B (rybpb).